The sequence spans 505 residues: MSEQQAQGAEAAVDLNNELKTRREKLAALREHGVAFPNDFRRDHTSDQLHADFDGKENEELEALNIEVCVAGRMMTRRIMGKASFVTLQDVGGRIQLYVARDDLPEGVYNEQFKKWDLGDILGARGKLFKTKTGELSIHCTELRLLTKALRPLPDKFHGLQDQEARYRQRYLDLIANDESRKTFKVRSQILAGIRQFMVGRGFMEVETPMMQVIPGGASARPFVTHHNALDLDMYLRIAPELYLKRLVVGGFERVFEINRNFRNEGISVRHNPEFTMMELYMAYADYKDLIELTESLFRTLAQDVLGTTQVPYGEETFDFGKPFEKLTMREAIKKYRPETDLADLDDFEKAKGIAQAVGIKVEKSWGLGRVVTEIFEEVAEAHLIQPTFITEYPAEVSPLARRNDENPEITDRFEFFIGGREIGNGFSELNDAEDQAQRFQDQVAAKDAGDDEAMFYDEDYVTALEHGLPPTAGLGIGIDRMVMLFTNSHTIRDVILFPAMRPVK.

2 residues coordinate Mg(2+): Glu415 and Glu422.

This sequence belongs to the class-II aminoacyl-tRNA synthetase family. In terms of assembly, homodimer. Mg(2+) serves as cofactor.

The protein localises to the cytoplasm. It carries out the reaction tRNA(Lys) + L-lysine + ATP = L-lysyl-tRNA(Lys) + AMP + diphosphate. This is Lysine--tRNA ligase from Cronobacter sakazakii (strain ATCC BAA-894) (Enterobacter sakazakii).